The primary structure comprises 421 residues: Core-capsid bridging protein (421 aa).

It belongs to the adenoviridae core-capsid bridging protein family. In terms of assembly, monomer. Homodimer. Exists in equilibrium between monomers and dimers in solution. Interacts with the histone-like nucleoprotein; this interactions bridge the virus core to the capsid. Interacts with core protein X; this interactions bridge the virus core to the capsid. Interacts with the endosome lysis protein VI; this interactions bridge the virus core to the capsid. Interacts with the peripentonal hexons. Interacts with host NPM1; this interaction might play a role in virus assembly.

Its subcellular location is the virion. The protein resides in the host nucleus. It is found in the host nucleolus. Associates loosely with the viral DNA to form an outer shell around the nucleoprotein-DNA complex and links it with the capsid by binding the endosome lysis protein. Dissociates from the viral genome during entry. Might be involved in nuclear capsid assembly of the viral particles through its association with NPM1/nucleophosmin. The protein is Core-capsid bridging protein of Canine adenovirus serotype 1 (strain CLL) (CAdV-1).